Consider the following 437-residue polypeptide: Trigger factor (437 aa).

Residues 164–249 enclose the PPIase FKBP-type domain; the sequence is GDFAKFDFEG…LHEIQCKKIG (86 aa).

The protein belongs to the FKBP-type PPIase family. Tig subfamily.

The protein resides in the cytoplasm. It carries out the reaction [protein]-peptidylproline (omega=180) = [protein]-peptidylproline (omega=0). Functionally, involved in protein export. Acts as a chaperone by maintaining the newly synthesized protein in an open conformation. Functions as a peptidyl-prolyl cis-trans isomerase. The sequence is that of Trigger factor from Campylobacter hominis (strain ATCC BAA-381 / DSM 21671 / CCUG 45161 / LMG 19568 / NCTC 13146 / CH001A).